The primary structure comprises 91 residues: MWPVLWAAARTYAPYITFPVAFVVGAVGYQLEWFIRGTPEHPVEEQSIQEKREERTLQETMGKDVTQVISLKEKLEFTPKAVLNRNRQEKS.

The helical transmembrane segment at 12–34 (YAPYITFPVAFVVGAVGYQLEWF) threads the bilayer.

It belongs to the SMIM12 family.

It localises to the membrane. In Xenopus laevis (African clawed frog), this protein is Small integral membrane protein 12-A (smim12-a).